We begin with the raw amino-acid sequence, 335 residues long: Phosphate acyltransferase (335 aa).

It belongs to the PlsX family. As to quaternary structure, homodimer. Probably interacts with PlsY.

The protein localises to the cytoplasm. The catalysed reaction is a fatty acyl-[ACP] + phosphate = an acyl phosphate + holo-[ACP]. It functions in the pathway lipid metabolism; phospholipid metabolism. In terms of biological role, catalyzes the reversible formation of acyl-phosphate (acyl-PO(4)) from acyl-[acyl-carrier-protein] (acyl-ACP). This enzyme utilizes acyl-ACP as fatty acyl donor, but not acyl-CoA. In Clostridium botulinum (strain Langeland / NCTC 10281 / Type F), this protein is Phosphate acyltransferase.